Consider the following 597-residue polypeptide: DNA mismatch repair protein MutL (597 aa).

It belongs to the DNA mismatch repair MutL/HexB family.

Functionally, this protein is involved in the repair of mismatches in DNA. It is required for dam-dependent methyl-directed DNA mismatch repair. May act as a 'molecular matchmaker', a protein that promotes the formation of a stable complex between two or more DNA-binding proteins in an ATP-dependent manner without itself being part of a final effector complex. The chain is DNA mismatch repair protein MutL from Rhodopseudomonas palustris (strain BisB5).